The primary structure comprises 206 residues: Holliday junction branch migration complex subunit RuvA (206 aa).

Residues 1 to 67 (MIASIFGKIT…QILEEGFAFN (67 aa)) form a domain I region. A domain II region spans residues 68–141 (TLEEKEWFSK…YDRDDGGKRI (74 aa)). Residues 141–145 (IKPNT) form a flexible linker region. Positions 146 to 206 (AMANDYDEMF…QNNEVTNKTA (61 aa)) are domain III.

It belongs to the RuvA family. In terms of assembly, homotetramer. Forms an RuvA(8)-RuvB(12)-Holliday junction (HJ) complex. HJ DNA is sandwiched between 2 RuvA tetramers; dsDNA enters through RuvA and exits via RuvB. An RuvB hexamer assembles on each DNA strand where it exits the tetramer. Each RuvB hexamer is contacted by two RuvA subunits (via domain III) on 2 adjacent RuvB subunits; this complex drives branch migration. In the full resolvosome a probable DNA-RuvA(4)-RuvB(12)-RuvC(2) complex forms which resolves the HJ.

Its subcellular location is the cytoplasm. In terms of biological role, the RuvA-RuvB-RuvC complex processes Holliday junction (HJ) DNA during genetic recombination and DNA repair, while the RuvA-RuvB complex plays an important role in the rescue of blocked DNA replication forks via replication fork reversal (RFR). RuvA specifically binds to HJ cruciform DNA, conferring on it an open structure. The RuvB hexamer acts as an ATP-dependent pump, pulling dsDNA into and through the RuvAB complex. HJ branch migration allows RuvC to scan DNA until it finds its consensus sequence, where it cleaves and resolves the cruciform DNA. This chain is Holliday junction branch migration complex subunit RuvA, found in Mycoplasma pneumoniae (strain ATCC 29342 / M129 / Subtype 1) (Mycoplasmoides pneumoniae).